A 108-amino-acid chain; its full sequence is Peptidyl-prolyl cis-trans isomerase FKBP1B (108 aa).

The 89-residue stretch at Gly-20–Glu-108 folds into the PPIase FKBP-type domain.

As to quaternary structure, identified in a complex composed of RYR2, FKBP1B, PKA catalytic subunit, PRKAR2A, AKAP6, and the protein phosphatases PP2A and PP1. Interacts directly with RYR2.

It localises to the cytoplasm. The protein resides in the sarcoplasmic reticulum. The catalysed reaction is [protein]-peptidylproline (omega=180) = [protein]-peptidylproline (omega=0). With respect to regulation, inhibited by both FK506 and rapamycin. In terms of biological role, has the potential to contribute to the immunosuppressive and toxic effects of FK506 and rapamycin. PPIases accelerate the folding of proteins. It catalyzes the cis-trans isomerization of proline imidic peptide bonds in oligopeptides. The protein is Peptidyl-prolyl cis-trans isomerase FKBP1B (FKBP1B) of Bos taurus (Bovine).